The sequence spans 33 residues: Photosystem II reaction center protein Psb30 (33 aa).

The chain crosses the membrane as a helical span at residues 5 to 25 (LIVQLTSLILISIAGPIIIAL).

This sequence belongs to the Psb30/Ycf12 family. As to quaternary structure, PSII is composed of 1 copy each of membrane proteins PsbA, PsbB, PsbC, PsbD, PsbE, PsbF, PsbH, PsbI, PsbJ, PsbK, PsbL, PsbM, PsbT, PsbY, PsbZ, Psb30/Ycf12, peripheral proteins of the oxygen-evolving complex and a large number of cofactors. It forms dimeric complexes.

The protein localises to the plastid. Its subcellular location is the chloroplast thylakoid membrane. Functionally, a core subunit of photosystem II (PSII), probably helps stabilize the reaction center. The protein is Photosystem II reaction center protein Psb30 of Euglena myxocylindracea.